The chain runs to 205 residues: MSNIVWHQHSVDQAARAKLKGQNPVLLWFTGLSGAGKSTLAGALERALFEAGFHTYLLDGDNVRHGLCKDLGFSVADRDENLRRVGEVAKLMVDAGLVVLSAFISPTREERDSIRARFPTGQFIEVHVSTPLSICEQRDPKGLYVKARRGEISNFTGISSPYEAPLSAELTIDTSKGDLASQVRALIDYLTAIEVINPSRLTASA.

31 to 38 is an ATP binding site; the sequence is GLSGAGKS. Catalysis depends on Ser105, which acts as the Phosphoserine intermediate.

It belongs to the APS kinase family.

It catalyses the reaction adenosine 5'-phosphosulfate + ATP = 3'-phosphoadenylyl sulfate + ADP + H(+). It functions in the pathway sulfur metabolism; hydrogen sulfide biosynthesis; sulfite from sulfate: step 2/3. Functionally, catalyzes the synthesis of activated sulfate. This chain is Adenylyl-sulfate kinase, found in Shewanella sp. (strain MR-4).